Here is a 387-residue protein sequence, read N- to C-terminus: MKWLLLLGLLALSECIIHKVPLVRKKSLRKNLIEKGLLKDYLKTHTPNLATKYLPKAAFDSVPTETLENYLDTEYFGTIGIGTPAQDFTVIFDTGSSNLWVPSVYCSSAACSVHNQFNPEDSSTFQATSESLSITYGTGSMTGFLGYDTVKVGNIEDTNQIFGLSESEPGSFLYYAPFDGILGLAYPSISSSDATPVFDNMWNEGLVSEDLFSVYLSSDDESGSVVMFGGIDSSYYTGSLNWVPVSYEGYWQITLDSITMDGETIACADSCQAIVDTGTSLLAGPTSAISNIQSYIGASENSDGEMIVSCSSMYSLPNIVFTINGVQYPVPASAYILEEDDACISGFEGMNLDTYTGELWILGDVFIRQYFTVFDRANNQLGLAAAA.

Positions 1-15 are cleaved as a signal peptide; that stretch reads MKWLLLLGLLALSEC. A propeptide spans 16-59 (activation peptide); the sequence is IIHKVPLVRKKSLRKNLIEKGLLKDYLKTHTPNLATKYLPKAAF. One can recognise a Peptidase A1 domain in the interval 75–384; it reads YFGTIGIGTP…DRANNQLGLA (310 aa). D93 is an active-site residue. 2 cysteine pairs are disulfide-bonded: C106–C111 and C267–C271. Residue D276 is part of the active site. C310 and C343 form a disulfide bridge.

Belongs to the peptidase A1 family.

It localises to the secreted. The catalysed reaction is Preferential cleavage: hydrophobic, preferably aromatic, residues in P1 and P1' positions. Cleaves 1-Phe-|-Val-2, 4-Gln-|-His-5, 13-Glu-|-Ala-14, 14-Ala-|-Leu-15, 15-Leu-|-Tyr-16, 16-Tyr-|-Leu-17, 23-Gly-|-Phe-24, 24-Phe-|-Phe-25 and 25-Phe-|-Tyr-26 bonds in the B chain of insulin.. Its function is as follows. Shows particularly broad specificity; although bonds involving phenylalanine and leucine are preferred, many others are also cleaved to some extent. This is Pepsin-3 from Oryctolagus cuniculus (Rabbit).